We begin with the raw amino-acid sequence, 604 residues long: Putative O-acetyltransferase SAV0974 (604 aa).

11 helical membrane passes run 15–35, 43–63, 85–105, 150–170, 176–196, 212–232, 240–260, 267–287, 310–330, 332–352, and 377–397; these read YMPG…IYHL, GFLG…SLLL, LLPA…LLKS, AIEE…LLTI, IGFI…FIYS, LQTL…KLKN, YVID…FFII, IYDG…ASVV, YSLY…YVDG, IPVY…ELSY, and FIRM…LVGA. Residues serine 459, aspartate 581, and histidine 584 contribute to the active site.

Belongs to the acyltransferase 3 family.

The protein resides in the cell membrane. The protein is Putative O-acetyltransferase SAV0974 of Staphylococcus aureus (strain Mu50 / ATCC 700699).